The primary structure comprises 441 residues: Squalene synthase (441 aa).

2 helical membrane passes run 293–313 (SFQF…LVFG) and 420–440 (FKFN…YWYA).

The protein belongs to the phytoene/squalene synthase family. The cofactor is Mg(2+).

The protein resides in the endoplasmic reticulum membrane. It catalyses the reaction 2 (2E,6E)-farnesyl diphosphate + NADPH + H(+) = squalene + 2 diphosphate + NADP(+). The catalysed reaction is 2 (2E,6E)-farnesyl diphosphate + NADH + H(+) = squalene + 2 diphosphate + NAD(+). It functions in the pathway terpene metabolism; lanosterol biosynthesis; lanosterol from farnesyl diphosphate: step 1/3. Its function is as follows. Catalyzes the condensation of 2 two farnesyl pyrophosphate moieties to form squalene. It is the first committed enzyme of the sterol biosynthesis pathway. Required for the biosynthesis of ergosterol. In Eremothecium gossypii (strain ATCC 10895 / CBS 109.51 / FGSC 9923 / NRRL Y-1056) (Yeast), this protein is Squalene synthase (ERG9).